The primary structure comprises 479 residues: NADH-quinone oxidoreductase subunit N 2 (479 aa).

Helical transmembrane passes span 9 to 29 (WALA…LLIV), 40 to 60 (LLLW…LMLA), 75 to 95 (RFAV…FFLS), 110 to 130 (YVLL…IDLL), 131 to 151 (SIYV…GFLR), 164 to 184 (VILG…IYGL), 206 to 226 (LLLA…AVPF), 238 to 258 (PTTI…AVIL), 272 to 292 (WIIV…VALV), 299 to 319 (LLAY…VAGG), 326 to 346 (VMLY…AVIM), 371 to 391 (ALLM…AGFF), 404 to 424 (GFVA…YFYI), and 449 to 469 (ATLA…AWFL).

It belongs to the complex I subunit 2 family. NDH-1 is composed of 14 different subunits. Subunits NuoA, H, J, K, L, M, N constitute the membrane sector of the complex.

Its subcellular location is the cell inner membrane. The catalysed reaction is a quinone + NADH + 5 H(+)(in) = a quinol + NAD(+) + 4 H(+)(out). In terms of biological role, NDH-1 shuttles electrons from NADH, via FMN and iron-sulfur (Fe-S) centers, to quinones in the respiratory chain. The immediate electron acceptor for the enzyme in this species is believed to be ubiquinone. Couples the redox reaction to proton translocation (for every two electrons transferred, four hydrogen ions are translocated across the cytoplasmic membrane), and thus conserves the redox energy in a proton gradient. The polypeptide is NADH-quinone oxidoreductase subunit N 2 (Rhizobium meliloti (strain 1021) (Ensifer meliloti)).